The sequence spans 177 residues: ATP-dependent protease subunit HslV (177 aa).

Threonine 2 is a catalytic residue. Residues alanine 159, aspartate 162, and threonine 165 each coordinate Na(+).

Belongs to the peptidase T1B family. HslV subfamily. As to quaternary structure, a double ring-shaped homohexamer of HslV is capped on each side by a ring-shaped HslU homohexamer. The assembly of the HslU/HslV complex is dependent on binding of ATP.

The protein resides in the cytoplasm. The catalysed reaction is ATP-dependent cleavage of peptide bonds with broad specificity.. Its activity is regulated as follows. Allosterically activated by HslU binding. Functionally, protease subunit of a proteasome-like degradation complex believed to be a general protein degrading machinery. The sequence is that of ATP-dependent protease subunit HslV from Lactobacillus leichmannii.